Reading from the N-terminus, the 127-residue chain is Ribonuclease P protein component (127 aa).

Belongs to the RnpA family. In terms of assembly, consists of a catalytic RNA component (M1 or rnpB) and a protein subunit.

The enzyme catalyses Endonucleolytic cleavage of RNA, removing 5'-extranucleotides from tRNA precursor.. In terms of biological role, RNaseP catalyzes the removal of the 5'-leader sequence from pre-tRNA to produce the mature 5'-terminus. It can also cleave other RNA substrates such as 4.5S RNA. The protein component plays an auxiliary but essential role in vivo by binding to the 5'-leader sequence and broadening the substrate specificity of the ribozyme. This is Ribonuclease P protein component from Agrobacterium fabrum (strain C58 / ATCC 33970) (Agrobacterium tumefaciens (strain C58)).